We begin with the raw amino-acid sequence, 524 residues long: MSSIQLQKYLDLLPENAILNAGIAIAGLSAAYAIGLVIYRLYLSPISKFPGPKIAAATFWYELYYDVIHKGQYFHKIEEMHEKYGPIVRINPHELSIRDPDYYDELYVSGSVRPSDRYEGFVNGVVDFEGSHLATVAHELHRKRRKPLDPYFSRAGVNRLEPMVADLTEELVVKRFEEFKGTGKVVRLDHAFTAYSGDIISALCIDEPPHFTSTPDFTPSWFDLFHSGVVTLPLFMGLPWLIHLIRLIPESILAVIDPGAQNWNTFRMMCYDSIKDTKREKGAQPTKDTSLLGRPTLFRHLVNSDLPASELSDERLLREAQVLIGSGTMTTAGTMCFLVYYIKSNPEIHRRLTEELKPIMEGYPHKKPSWAEIEKAEYLQAVLKEGLRLSFGTIHRRPRVSPNQPLQFKEWVIPAGVPVGMSAYFQHTDPKIFPNPHEFNPDRWLSNVTPAMKKNYVPFSKGSRHCLGMNLAYCELNYIIATMFRPGAVDFDLFETTELDVKPTHDMVVPLPSLKSKGFKVKFN.

The next 3 membrane-spanning stretches (helical) occupy residues 18-38 (ILNAGIAIAGLSAAYAIGLVI), 225-245 (FHSGVVTLPLFMGLPWLIHLI), and 322-342 (VLIGSGTMTTAGTMCFLVYYI). Cys466 lines the heme pocket.

It belongs to the cytochrome P450 family. It depends on heme as a cofactor.

It is found in the membrane. It catalyses the reaction ophiobolin F + 4 reduced [NADPH--hemoprotein reductase] + 4 O2 = ophiobolin C + 4 oxidized [NADPH--hemoprotein reductase] + 6 H2O + 4 H(+). Its pathway is secondary metabolite biosynthesis; terpenoid biosynthesis. In terms of biological role, cytochrome P450 monooxygenase; part of the gene cluster that mediates the biosynthesis of the sesterterpenes ophiobolins, fungal phytotoxins with potential anti-cancer activities. The first step of the pathway is performed by the sesterterpene synthase oblA that possesses both prenyl transferase and terpene cyclase activity, converting isopentenyl diphosphate and dimethylallyl diphosphate into geranylfarnesyl diphosphate (GFPP) and further converting GFPP into ophiobolin F, respectively. Other sesterterpenoids (C(25) terpenoids) are found as minor products of oblA. The cytochrome P450 monooxygenase oblB then catalyzes a four-step oxidative transformation of ophiobolin F to yield ophiobolin C. The FAD-dependent oxidoreductase oblC might be involved in a later oxidation step that produces ophiobolin A. This is Cytochrome P450 monooxygenase oblB from Cochliobolus heterostrophus (strain C5 / ATCC 48332 / race O) (Southern corn leaf blight fungus).